The primary structure comprises 465 residues: Paired box protein Pax-8 (465 aa).

The segment at residues 26–152 (GHGGLNQLGG…SSINRIIRTK (127 aa)) is a DNA-binding region (paired). A PAI subdomain region spans residues 29–85 (GLNQLGGAFVNGRPLPEVVRQRIVDLAHQGVRPCDISRQLRVSHGCVSKILGRYYET). Residues 104 to 152 (KVVEKIGDYKRQNPTMFAWEIRDRLLTDGVCDNDTVPSVSSINRIIRTK) form an RED subdomain region. A disordered region spans residues 206–227 (PSADGKRKLDDSDQESCRLSID).

As to expression, expression starts at late gastrula stages in cells fated to become the primordia of the otic system and the pronephric kidney. Expression is maintained in these two structures through late tailbud stages. Does not appear to be expressed in the thyroid gland.

The protein resides in the nucleus. Functionally, probable transcription factor. Involved in kidney development, acting synergistically with lhx1/lim-1 to establish the pronephric primordium in late gastrulae/early neurulae. This is Paired box protein Pax-8 from Xenopus laevis (African clawed frog).